The following is a 193-amino-acid chain: Protein PATRONUS 1 (193 aa).

The DEN-box motif lies at 14–16 (DEN). Residues 46-49 (RKAL) carry the D-box motif.

Interacts directly with the anaphase promoting complex/cyclosome (APC/C) through the CDC27B and CDC20-1 subunits. In terms of tissue distribution, expressed in somatic and reproductive tissues. Expressed in inflorescence, young buds, roots and basal portion of young leaves. Expressed in proliferating cells such as apical meristems of roots and shoots, expanding cotyledons and leaves, root vascular tissues, and in stomatal precursor cells.

It localises to the nucleus. The protein localises to the cytoplasm. Required for the maintenance of centromeric cohesion during interkinesis, until meiosis II. Required for regular configuration and segregation of sister chromatids in meiosis II. Also required for centromere cohesion during meiosis I. Involved in spindle organization at the end of telophase I and in meiosis II. Required to prevent precocious release of pericentromeric cohesins during meiosis, but not for cohesion establishment and monopolar orientation of kinetochores at meiosis I. Involved also in somatic development. Regulates mitotic cell division and ploidy stability in somatic cell types. May be involved in the organization of microtubules dynamics. Involved in abiotic stresses and mono- or divalent ions tolerance and may play a role in maintaining meristematic activity under saline conditions. PANS1 and GIG1 are part of a network linking centromere cohesion and cell cycle progression through control of APC/C activity. Regulates the number of dividing cells in root meristem and is necessary for the anaphase onset control through an APC/C-mediated pathway. Involved in maintaining correct chromosome arm cohesion under stress conditions. In Arabidopsis thaliana (Mouse-ear cress), this protein is Protein PATRONUS 1.